A 263-amino-acid polypeptide reads, in one-letter code: Troponin T, fast skeletal muscle isoforms (263 aa).

The span at 1-26 (MSDTEEVEHGEEEYEEEAHEAEEVHE) shows a compositional bias: acidic residues. Disordered stretches follow at residues 1–66 (MSDT…FDDI), 107–188 (RAER…VLAE), and 243–263 (DQAQ…GRWK). The residue at position 2 (Ser-2) is an N-acetylserine. 3 stretches are compositionally biased toward basic and acidic residues: residues 56 to 66 (PEGEKVDFDDI), 107 to 149 (RAER…DDLK), and 177 to 188 (TARETKKKVLAE). Positions 247 to 263 (KHSKKAGAKGKVGGRWK) are enriched in basic residues.

Belongs to the troponin T family.

Its function is as follows. Troponin T is the tropomyosin-binding subunit of troponin, the thin filament regulatory complex which confers calcium-sensitivity to striated muscle actomyosin ATPase activity. The protein is Troponin T, fast skeletal muscle isoforms (TNNT3) of Gallus gallus (Chicken).